We begin with the raw amino-acid sequence, 168 residues long: Histone doublet miniH2B-H2A (168 aa).

It is found in the host nucleus. Its subcellular location is the host cytoplasm. The protein resides in the virion. Histone-like protein that is recruited to viral factories during viral replication and participates in viral DNA packaging and virion production probably by forming unstable nucleosome-like particles. May compact the viral DNA. This Melbournevirus (MelV) protein is Histone doublet miniH2B-H2A.